A 609-amino-acid polypeptide reads, in one-letter code: Zinc metalloproteinase-disintegrin-like VAP2B (609 aa).

An N-terminal signal peptide occupies residues 1-20; it reads MIQVLLVTICLAAFPYQGSS. The propeptide occupies 21–189; the sequence is IILESGNVND…KKASQLVVTA (169 aa). Position 190 is a pyrrolidone carboxylic acid (Glu) (E190). The Peptidase M12B domain maps to 198–393; sequence RFVELFLVVD…HNPECILNEP (196 aa). Residues E201 and D285 each coordinate Ca(2+). Intrachain disulfides connect C308–C388, C348–C372, and C350–C355. Position 333 (H333) interacts with Zn(2+). E334 is an active-site residue. Zn(2+) is bound by residues H337 and H343. An N-linked (GlcNAc...) asparagine glycan is attached at N371. Ca(2+)-binding residues include C388, N391, V403, N406, L408, E410, E413, and D416. Residues 401–487 enclose the Disintegrin domain; it reads PPVCGNELLE…ECPADVFHKN (87 aa). Cystine bridges form between C404-C423, C404-C433, C415-C428, C415-C433, C417-C423, C427-C450, C441-C447, C446-C472, C459-C479, C466-C491, C466-C498, C491-C503, C498-C503, C510-C525, C510-C560, C525-C571, C538-C548, C548-C555, C555-C597, C560-C571, C591-C602, and C597-C602. The segment at 459-472 is inhibits platelet aggregation; that stretch reads CRASMSECDPAEHC. Positions 465-467 match the D/ECD-tripeptide motif; that stretch reads ECD. Ca(2+) is bound by residues D467, P468, E470, D482, and V483.

Belongs to the venom metalloproteinase (M12B) family. P-III subfamily. P-IIIb sub-subfamily. In terms of assembly, monomer or heterodimer; non-covalently linked. Interacts with fibrillar collagen. Zn(2+) serves as cofactor. The N-terminus is blocked. In terms of tissue distribution, expressed by the venom gland.

The protein resides in the secreted. Its function is as follows. Zinc metalloprotease that abolishes platelet aggregation induced by collagen, but has no effect on platelet aggregation induced by ADP or thromboxane analog. This inhibition may be due to its ability to bind collagen and block the binding site on collagen for platelets and/or to its ability to bind to the platelet alpha-2/beta-1 collagen receptor (ITGA2/ITGB1) to block its interaction with collagen and hence prevent platelet stimulation. Functionally, abolishes platelet aggregation induced by collagen (IC(50)=66 nM) but not ADP-stimulated platelet aggregation. This inhibition may be due to its ability to bind collagen and block the binding site on collagen for platelets and/or to its ability to bind to the platelet alpha-2/beta-1 collagen receptor (ITGA2/ITGB1) to block its interaction with collagen and hence prevent platelet stimulation. This chain is Zinc metalloproteinase-disintegrin-like VAP2B, found in Crotalus atrox (Western diamondback rattlesnake).